The primary structure comprises 557 residues: Dihydroxy-acid dehydratase (557 aa).

Mg(2+) is bound at residue aspartate 78. [2Fe-2S] cluster is bound at residue cysteine 119. Residues aspartate 120 and lysine 121 each coordinate Mg(2+). An N6-carboxylysine modification is found at lysine 121. Cysteine 192 is a binding site for [2Fe-2S] cluster. Residue glutamate 442 coordinates Mg(2+). The active-site Proton acceptor is the serine 468.

This sequence belongs to the IlvD/Edd family. In terms of assembly, homodimer. [2Fe-2S] cluster is required as a cofactor. Requires Mg(2+) as cofactor.

The catalysed reaction is (2R)-2,3-dihydroxy-3-methylbutanoate = 3-methyl-2-oxobutanoate + H2O. It catalyses the reaction (2R,3R)-2,3-dihydroxy-3-methylpentanoate = (S)-3-methyl-2-oxopentanoate + H2O. It participates in amino-acid biosynthesis; L-isoleucine biosynthesis; L-isoleucine from 2-oxobutanoate: step 3/4. It functions in the pathway amino-acid biosynthesis; L-valine biosynthesis; L-valine from pyruvate: step 3/4. In terms of biological role, functions in the biosynthesis of branched-chain amino acids. Catalyzes the dehydration of (2R,3R)-2,3-dihydroxy-3-methylpentanoate (2,3-dihydroxy-3-methylvalerate) into 2-oxo-3-methylpentanoate (2-oxo-3-methylvalerate) and of (2R)-2,3-dihydroxy-3-methylbutanoate (2,3-dihydroxyisovalerate) into 2-oxo-3-methylbutanoate (2-oxoisovalerate), the penultimate precursor to L-isoleucine and L-valine, respectively. This is Dihydroxy-acid dehydratase from Bacillus anthracis (strain A0248).